A 704-amino-acid chain; its full sequence is Polyribonucleotide nucleotidyltransferase (704 aa).

Positions 490 and 496 each coordinate Mg(2+). In terms of domain architecture, KH spans 557–616 (PKIEMIQIKPAKIKDVIGKGGETINSIIDETGVKIDIDQDGNVSIASSDAEMIKKAIKII). The S1 motif domain occupies 626–694 (GQVYLAKVVR…KQGRVNVSRK (69 aa)).

It belongs to the polyribonucleotide nucleotidyltransferase family. It depends on Mg(2+) as a cofactor.

The protein localises to the cytoplasm. The catalysed reaction is RNA(n+1) + phosphate = RNA(n) + a ribonucleoside 5'-diphosphate. Involved in mRNA degradation. Catalyzes the phosphorolysis of single-stranded polyribonucleotides processively in the 3'- to 5'-direction. This Enterococcus faecalis (strain ATCC 700802 / V583) protein is Polyribonucleotide nucleotidyltransferase.